We begin with the raw amino-acid sequence, 289 residues long: MDQLDQLSDYFPPPLPVGQTLFDWGKRTYVMGILNTTPDSFSDGGEFNSLPTAIHQAKTMVQGGAHIIDIGGQSTRPGAETVSLKEELERTIPIIQALRQELDIPISIDTTRAEVARQALQAGADMVNDISGATFEPEILAVAAQHKAPIILMHIRGNPQTMQNLTDYGDLIGEMRQFFSAQVDLARHYGVLPEQIILDPGIGFAKTAEQNITLLRQLPELKRLGFPLLVGPSRKSFIGKILDQPDPKERVWGTGATCCRAIAGGADIVRVHDVEAMAQICKVADALWR.

The Pterin-binding domain maps to 28–282; it reads TYVMGILNTT…DVEAMAQICK (255 aa). Asn35 lines the Mg(2+) pocket. (7,8-dihydropterin-6-yl)methyl diphosphate is bound by residues Thr75, Asp109, Asn128, Asp199, Lys235, and 270–272; that span reads RVH.

It belongs to the DHPS family. Mg(2+) is required as a cofactor.

The catalysed reaction is (7,8-dihydropterin-6-yl)methyl diphosphate + 4-aminobenzoate = 7,8-dihydropteroate + diphosphate. It participates in cofactor biosynthesis; tetrahydrofolate biosynthesis; 7,8-dihydrofolate from 2-amino-4-hydroxy-6-hydroxymethyl-7,8-dihydropteridine diphosphate and 4-aminobenzoate: step 1/2. Its function is as follows. Catalyzes the condensation of para-aminobenzoate (pABA) with 6-hydroxymethyl-7,8-dihydropterin diphosphate (DHPt-PP) to form 7,8-dihydropteroate (H2Pte), the immediate precursor of folate derivatives. In Synechocystis sp. (strain ATCC 27184 / PCC 6803 / Kazusa), this protein is Dihydropteroate synthase (folP).